We begin with the raw amino-acid sequence, 631 residues long: Shootin-1 (631 aa).

The residue at position 1 (M1) is an N-acetylmethionine. A phosphoserine mark is found at S3 and S4. A coiled-coil region spans residues 7 to 353 (EKQLQLITSL…RVNQSENSVP (347 aa)). S101 bears the Phosphoserine; by PAK1 mark. S249 bears the Phosphoserine mark. Disordered regions lie at residues 343–404 (KRVN…EVTD) and 417–508 (IKKG…KSMP). Pro residues predominate over residues 352–369 (VPPPPPPPPPLPPPPPNP). S375 is modified (phosphoserine). Positions 456–465 (LNKSTSSRSL) are enriched in polar residues. The residue at position 473 (S473) is a Phosphoserine. T487 is subject to Phosphothreonine. Residues 490–505 (ADSSSPTGILATSESK) are compositionally biased toward polar residues. A Phosphoserine modification is found at S494. A Phosphothreonine modification is found at T496. Residues S506 and S515 each carry the phosphoserine modification. The tract at residues 530–631 (FNNPCPLTPE…KTGETDSSNC (102 aa)) is disordered. T537 is modified (phosphothreonine). The span at 590 to 602 (PQTKDQAAEKDPT) shows a compositional bias: basic and acidic residues.

This sequence belongs to the shootin family. In terms of assembly, interacts with L1CAM; this interaction occurs at axonal growth cones. Interacts with actin filament retrograde flow; this interaction is enhanced in a netrin-1- and PAK1-dependent manner and promotes F-actin-substrate coupling and concomitant formation of traction forces at axonal growth cones. Interacts with RUFY3. Interacts with PFN2. Interacts (via N-terminus) with KIF20B; this interaction is direct and promotes the association of SHTN1 to microtubules in primary neurons. Associates with microtubule. Post-translationally, phosphorylated on Ser-101 and Ser-249 by PAK1 through a CDC42- and RAC1-dependent signaling pathway, which enhances its association with F-actin retrograde flow in filopodia and lamellipodia of axonal growth cones. Phosphorylation on Ser-101 and Ser-249 is increased by netrin-1. Expressed in hippocampal neurons.

The protein localises to the perikaryon. Its subcellular location is the cell projection. It localises to the axon. The protein resides in the growth cone. It is found in the cytoplasm. The protein localises to the cytoskeleton. Its subcellular location is the filopodium. It localises to the lamellipodium. Involved in the generation of internal asymmetric signals required for neuronal polarization and neurite outgrowth. Mediates netrin-1-induced F-actin-substrate coupling or 'clutch engagement' within the axon growth cone through activation of CDC42, RAC1 and PAK1-dependent signaling pathway, thereby converting the F-actin retrograde flow into traction forces, concomitantly with filopodium extension and axon outgrowth. Plays a role in cytoskeletal organization by regulating the subcellular localization of phosphoinositide 3-kinase (PI3K) activity at the axonal growth cone. Also plays a role in regenerative neurite outgrowth. In the developing cortex, cooperates with KIF20B to promote both the transition from the multipolar to the bipolar stage and the radial migration of cortical neurons from the ventricular zone toward the superficial layer of the neocortex. Involved in the accumulation of phosphatidylinositol 3,4,5-trisphosphate (PIP3) in the growth cone of primary hippocampal neurons. The chain is Shootin-1 from Mus musculus (Mouse).